The following is a 178-amino-acid chain: Thymidine kinase (178 aa).

13-20 is an ATP binding site; it reads GPMFAGKS. The active-site Proton acceptor is the E85. F115 serves as a coordination point for substrate. C140 and C143 together coordinate Zn(2+). 159 to 163 contacts substrate; the sequence is IEIIG. Zn(2+)-binding residues include C172 and C175.

This sequence belongs to the thymidine kinase family.

The enzyme catalyses thymidine + ATP = dTMP + ADP + H(+). The sequence is that of Thymidine kinase (TK) from Myxoma virus (strain Lausanne) (MYXV).